The chain runs to 324 residues: Lipoyl synthase (324 aa).

[4Fe-4S] cluster is bound by residues Cys65, Cys70, Cys76, Cys91, Cys95, Cys98, and Ser302. One can recognise a Radical SAM core domain in the interval 77–291; the sequence is WEDREATFLI…AQYAEGLGFA (215 aa).

This sequence belongs to the radical SAM superfamily. Lipoyl synthase family. Requires [4Fe-4S] cluster as cofactor.

The protein localises to the cytoplasm. It catalyses the reaction [[Fe-S] cluster scaffold protein carrying a second [4Fe-4S](2+) cluster] + N(6)-octanoyl-L-lysyl-[protein] + 2 oxidized [2Fe-2S]-[ferredoxin] + 2 S-adenosyl-L-methionine + 4 H(+) = [[Fe-S] cluster scaffold protein] + N(6)-[(R)-dihydrolipoyl]-L-lysyl-[protein] + 4 Fe(3+) + 2 hydrogen sulfide + 2 5'-deoxyadenosine + 2 L-methionine + 2 reduced [2Fe-2S]-[ferredoxin]. Its pathway is protein modification; protein lipoylation via endogenous pathway; protein N(6)-(lipoyl)lysine from octanoyl-[acyl-carrier-protein]: step 2/2. In terms of biological role, catalyzes the radical-mediated insertion of two sulfur atoms into the C-6 and C-8 positions of the octanoyl moiety bound to the lipoyl domains of lipoate-dependent enzymes, thereby converting the octanoylated domains into lipoylated derivatives. The chain is Lipoyl synthase from Mycobacterium ulcerans (strain Agy99).